Consider the following 399-residue polypeptide: Polypyrimidine tract-binding protein homolog 1 (399 aa).

Residue serine 2 is modified to N-acetylserine. 3 consecutive RRM domains span residues lysine 17 to arginine 95, glycine 109 to histidine 196, and serine 242 to histidine 322. The segment at alanine 352–glycine 399 is disordered. The segment covering proline 365 to serine 384 has biased composition (low complexity).

It localises to the nucleus. Plays a role in pre-mRNA splicing. Binds to the polypyrimidine tract of introns. May promote the binding of U2 snRNP to pre-mRNA. The chain is Polypyrimidine tract-binding protein homolog 1 (PTB) from Arabidopsis thaliana (Mouse-ear cress).